Reading from the N-terminus, the 56-residue chain is Large ribosomal subunit protein bL33 (56 aa).

The protein belongs to the bacterial ribosomal protein bL33 family.

The sequence is that of Large ribosomal subunit protein bL33 from Nocardioides sp. (strain ATCC BAA-499 / JS614).